The sequence spans 757 residues: Polyribonucleotide nucleotidyltransferase (757 aa).

Mg(2+) is bound by residues Asp-482 and Asp-488. One can recognise a KH domain in the interval 549–608; sequence PRMLSFYIDKDKISAAIGSKGKNIRSVCERSNAKIEIGDDGKVSVFATSGTEAEIAKSMM. The S1 motif domain occupies 618 to 686; it reads GSIVDVKVVR…KGGCPKLSRR (69 aa). The segment covering 703-714 has biased composition (basic and acidic residues); sequence EERKDGPNDRDN. Positions 703 to 757 are disordered; the sequence is EERKDGPNDRDNYYNNSFSRKPGGSHHKRPPRPRSGFSNRNRPKFGNNDSSSGFY. Over residues 725–734 the composition is skewed to basic residues; sequence GGSHHKRPPR.

This sequence belongs to the polyribonucleotide nucleotidyltransferase family. Mg(2+) serves as cofactor.

It localises to the cytoplasm. The enzyme catalyses RNA(n+1) + phosphate = RNA(n) + a ribonucleoside 5'-diphosphate. In terms of biological role, involved in mRNA degradation. Catalyzes the phosphorolysis of single-stranded polyribonucleotides processively in the 3'- to 5'-direction. This chain is Polyribonucleotide nucleotidyltransferase, found in Wolbachia sp. subsp. Drosophila simulans (strain wRi).